The chain runs to 441 residues: Probable cytosolic Fe-S cluster assembly factor v1g210509 (441 aa).

The [4Fe-4S] cluster site is built by cysteine 24, cysteine 72, cysteine 75, cysteine 78, cysteine 196, cysteine 252, and cysteine 401.

It belongs to the NARF family.

Functionally, component of the cytosolic iron-sulfur (Fe/S) protein assembly machinery. Required for maturation of extramitochondrial Fe/S proteins. The polypeptide is Probable cytosolic Fe-S cluster assembly factor v1g210509 (Nematostella vectensis (Starlet sea anemone)).